The sequence spans 320 residues: 3-oxoacyl-[acyl-carrier-protein] reductase 1, chloroplastic (320 aa).

The transit peptide at 1-60 directs the protein to the chloroplast; the sequence is MATTVAATKLTSLKAVKKLGFREIRQVRQWSPLQSAMPHFGMLRCGSRQSFATSTVVKAQ. Residue 82–106 coordinates NADP(+); sequence VTGASRGIGKAIALSLGKAGCKVLV. Serine 214 is a binding site for substrate. The active-site Proton acceptor is tyrosine 227.

Belongs to the short-chain dehydrogenases/reductases (SDR) family. Homotetramer.

The protein resides in the plastid. It localises to the chloroplast. It catalyses the reaction a (3R)-hydroxyacyl-[ACP] + NADP(+) = a 3-oxoacyl-[ACP] + NADPH + H(+). The protein operates within lipid metabolism; fatty acid biosynthesis. This chain is 3-oxoacyl-[acyl-carrier-protein] reductase 1, chloroplastic (gbkr1), found in Brassica napus (Rape).